The sequence spans 167 residues: Bacterial non-heme ferritin (167 aa).

Residues 1 to 145 (MLSKDIIKLL…DILDKIELIG (145 aa)) enclose the Ferritin-like diiron domain. The Fe cation site is built by Glu-17, Glu-50, His-53, Glu-94, and Gln-127.

It belongs to the ferritin family. Prokaryotic subfamily. Homooligomer of 24 subunits that assemble into a spherical protein shell (12 +/- 1 nM diameter) that can sequester at least 2000 iron atoms.

It localises to the cytoplasm. It carries out the reaction 4 Fe(2+) + O2 + 6 H2O = 4 iron(III) oxide-hydroxide + 12 H(+). Functionally, iron-storage protein. This chain is Bacterial non-heme ferritin (ftnA), found in Helicobacter pylori (strain J99 / ATCC 700824) (Campylobacter pylori J99).